Consider the following 326-residue polypeptide: Putative cell agglutination protein pfl9 (326 aa).

An N-terminal signal peptide occupies residues 1 to 21; the sequence is MNVVKYIIFSFALAPLLLVNA. An N-linked (GlcNAc...) asparagine glycan is attached at Asn-25. A run of 2 repeats spans residues 103–137 and 138–175. Residues 103–175 are 2 X 36 AA approximate tandem repeats; that stretch reads STITTTITSG…GEVEVITPSC (73 aa). Residues 164–326 enclose the DIPSY domain; that stretch reads QSGEVEVITP…RANDVTLQLY (163 aa).

Belongs to the mam3/map4 family.

The protein resides in the cell surface. Its function is as follows. May be involved in agglutination during conjugation or other aspects of colony formation. Induces flocculation when overexpressed. This is Putative cell agglutination protein pfl9 from Schizosaccharomyces pombe (strain 972 / ATCC 24843) (Fission yeast).